The chain runs to 266 residues: MSKVSGAGEEKLKVLALHGYRQNADSFKSKLGSFRKMLNKYVEFVFVSAPHPAAPLEAVGGEPDPNQRSWWFNKDDRTFKGTNQGGPAYGFDESLRLVERTWQAEGCHGLLGFSQGACFVGLLCDLSARGMTTMKPQFAVVASGFRSGSLVHLNYYENKVQIPSLHIFGETDEIITKDMSEALAETFLDPEVVTHPGGHYFPAQASLKETYVDFFRDQLQQHLEAKELQNATEENSFHLEGQEEAEESALQPVHEGLQNGSDSDSD.

Catalysis depends on charge relay system residues Ser-114, Asp-172, and His-199. The disordered stretch occupies residues 231–266 (ATEENSFHLEGQEEAEESALQPVHEGLQNGSDSDSD).

Belongs to the LovG family.

This chain is Esterase AGAP003155, found in Anopheles gambiae (African malaria mosquito).